Here is a 285-residue protein sequence, read N- to C-terminus: Pantothenate synthetase (285 aa).

Residue Met-30–His-37 participates in ATP binding. Catalysis depends on His-37, which acts as the Proton donor. Gln-61 is a (R)-pantoate binding site. Position 61 (Gln-61) interacts with beta-alanine. Gly-148–Asp-151 lines the ATP pocket. Gln-154 lines the (R)-pantoate pocket. Residues Ile-177 and Leu-185–Arg-188 contribute to the ATP site.

The protein belongs to the pantothenate synthetase family. Homodimer.

The protein resides in the cytoplasm. The catalysed reaction is (R)-pantoate + beta-alanine + ATP = (R)-pantothenate + AMP + diphosphate + H(+). It functions in the pathway cofactor biosynthesis; (R)-pantothenate biosynthesis; (R)-pantothenate from (R)-pantoate and beta-alanine: step 1/1. In terms of biological role, catalyzes the condensation of pantoate with beta-alanine in an ATP-dependent reaction via a pantoyl-adenylate intermediate. The chain is Pantothenate synthetase from Leptospira borgpetersenii serovar Hardjo-bovis (strain JB197).